Reading from the N-terminus, the 385-residue chain is GPN-loop GTPase 1 (385 aa).

13–18 (GSGKTT) is a binding site for GTP. The Gly-Pro-Asn (GPN)-loop; involved in dimer interface motif lies at 70–72 (GPN). 173 to 176 (NKTD) contributes to the GTP binding site. 3 positions are modified to phosphoserine: S304, S308, and S313. A compositionally biased stretch (acidic residues) spans 317–332 (EDANDGLVDRDEDEGV). Residues 317–356 (EDANDGLVDRDEDEGVEREYTFPGEERTKGEVNENSAPDL) form a disordered region. Basic and acidic residues predominate over residues 333-348 (EREYTFPGEERTKGEV). At S352 the chain carries Phosphoserine. Residue K369 forms a Glycyl lysine isopeptide (Lys-Gly) (interchain with G-Cter in ubiquitin) linkage.

The protein belongs to the GPN-loop GTPase family. In terms of assembly, heterodimers with GPN2 or GPN3. Binds to RNA polymerase II (RNAPII) in a GTP-dependent manner. Interacts with nuclear pore protein NUP133 and nuclear export factor CRM1. Interacts with PCL1. Post-translationally, phosphorylated by the cyclin-CDK PCL1-PHO85.

It is found in the cytoplasm. Its function is as follows. Small GTPase required for proper nuclear import of RNA polymerase II (RNAPII). May act at an RNAP assembly step prior to nuclear import. Promotes sister chromatid separation during anaphase. This is GPN-loop GTPase 1 from Saccharomyces cerevisiae (strain ATCC 204508 / S288c) (Baker's yeast).